Consider the following 171-residue polypeptide: MSKANSFNKEDLIACGHGELFGEHSPRLPIDNMLMIDRITKINADGGEFGKGEIVAELDINPELWFFKCHFDGDPVMPGCLGLDALWQLVGFFLGWEGAEGKGRALGVGEVKFTGQVLPDAKKVTYKLTVKRKVYRKLVMGIADAVMEVDGREIYSATDLKVGIFKDTSSF.

His70 is a catalytic residue.

It belongs to the thioester dehydratase family. FabA subfamily. As to quaternary structure, homodimer.

It is found in the cytoplasm. The catalysed reaction is a (3R)-hydroxyacyl-[ACP] = a (2E)-enoyl-[ACP] + H2O. It carries out the reaction (3R)-hydroxydecanoyl-[ACP] = (2E)-decenoyl-[ACP] + H2O. The enzyme catalyses (2E)-decenoyl-[ACP] = (3Z)-decenoyl-[ACP]. It functions in the pathway lipid metabolism; fatty acid biosynthesis. In terms of biological role, necessary for the introduction of cis unsaturation into fatty acids. Catalyzes the dehydration of (3R)-3-hydroxydecanoyl-ACP to E-(2)-decenoyl-ACP and then its isomerization to Z-(3)-decenoyl-ACP. Can catalyze the dehydratase reaction for beta-hydroxyacyl-ACPs with saturated chain lengths up to 16:0, being most active on intermediate chain length. In Shewanella woodyi (strain ATCC 51908 / MS32), this protein is 3-hydroxydecanoyl-[acyl-carrier-protein] dehydratase.